A 315-amino-acid chain; its full sequence is Transcription factor MafAa (315 aa).

A compositionally biased stretch (low complexity) spans 52-104 (STPISTPCSSVPSSPSFCAPSPGSQPGQNLVNGVNNNNNNSGNGNNNTQGSSG). Disordered regions lie at residues 52-108 (STPI…KPQM) and 169-191 (ATNG…AHAR). Residues 172–189 (GHHHPVHHHHHHHGHHAH) are compositionally biased toward basic residues. The segment at 223-248 (RLKQKRRTLKNRGYAQSCRYKRVQQR) is basic motif. The 64-residue stretch at 223 to 286 (RLKQKRRTLK…DLYKEKYEKL (64 aa)) folds into the bZIP domain. Residues 229-243 (RTLKNRGYAQSCRYK) are interaction with DNA. A leucine-zipper region spans residues 251–272 (LESEKCTLQSQVEQLKQDVARL). Residues 290-315 (AFNGGGNTRDPSSGNHVKTTSTDFFM) are disordered. Polar residues predominate over residues 298-315 (RDPSSGNHVKTTSTDFFM).

This sequence belongs to the bZIP family. Maf subfamily.

It localises to the nucleus. Functionally, transcription factor, possibly involved in transcription regulation during lens development, including that of crystallin genes. Specifically binds to the alphaCE2 enhancer element of crystallin gene. The protein is Transcription factor MafAa (mafaa) of Danio rerio (Zebrafish).